A 1303-amino-acid polypeptide reads, in one-letter code: Zinc finger CCCH domain-containing protein 4 (1303 aa).

Positions 1–33 are enriched in pro residues; it reads MEAAPGTPPPPPSESPPPPSPPPPSTPSPPPCS. Residues 1–388 form a disordered region; sequence MEAAPGTPPP…RDHDKPHQQS (388 aa). The span at 53–73 shows a compositional bias: acidic residues; that stretch reads DREDGELEEGELEDDGAEETQ. 2 positions are modified to phosphothreonine: T72 and T75. Phosphoserine is present on residues S76, S92, and S94. Residues 80–99 are compositionally biased toward basic and acidic residues; it reads ERSRKEKGEKHHSDSDEEKS. Residues 95–128 are a coiled coil; that stretch reads DEEKSHRRLKRKRKKEREKEKRRSKKRRKSKHKR. The segment covering 100–130 has biased composition (basic residues); it reads HRRLKRKRKKEREKEKRRSKKRRKSKHKRHA. The span at 135–144 shows a compositional bias: acidic residues; it reads DFSDFSDDSD. Residue Y155 is modified to Phosphotyrosine. Residues 194 to 218 are compositionally biased toward acidic residues; the sequence is EDYENEQYGEYEGDEEEDMGKEDYD. A compositionally biased stretch (basic and acidic residues) spans 219–235; that stretch reads DFTKELNQYRRAKEGSS. Residues 238–251 are compositionally biased toward basic residues; sequence RGSRGRGRGYRGRG. Residues 252–274 are compositionally biased toward gly residues; sequence SRGGSRGRGMGRGSRGRGRGSMG. Positions 278 to 304 are enriched in acidic residues; the sequence is PEDEEDFYEEEMDYGESEEPMGDDDYD. Basic and acidic residues predominate over residues 305–321; the sequence is EYSKELNQYRRSKDSRG. Basic residues predominate over residues 323–346; sequence GLSRGRGRGSRGRGKGMGRGRGRG. Residues 358–369 are compositionally biased toward acidic residues; it reads NDDEDFYDEDMG. A compositionally biased stretch (basic and acidic residues) spans 377-388; it reads RSRDHDKPHQQS. 3 consecutive C3H1-type zinc fingers follow at residues 390–417, 419–446, and 447–470; these read KKGK…HDIE, PKKR…HGDF, and PCKL…HDPL. Residues 486–496 show a composition bias toward acidic residues; the sequence is AEAGAEDEKEV. Residues 486-571 are disordered; that stretch reads AEAGAEDEKE…HEPLSPQQLQ (86 aa). Composition is skewed to pro residues over residues 507–529 and 539–558; these read LPKP…PQAP and GGPP…PQMP. R601 carries the asymmetric dimethylarginine modification. Over residues 605–624 the composition is skewed to pro residues; that stretch reads PGGPPGPMGPGPNMGPPGPM. Disordered regions lie at residues 605–685, 710–955, and 996–1288; these read PGGP…SGMM, GLLG…PRSQ, and PPVP…ASLK. A compositionally biased stretch (basic and acidic residues) spans 630–650; that stretch reads PDMHPDMHPDMHPDMHADMHA. A compositionally biased stretch (pro residues) spans 659 to 673; that stretch reads NPGPPMGPGGPPMMP. Basic and acidic residues-rich tracts occupy residues 717-739 and 782-795; these read DYGH…HPLE and ERAR…KQDR. A coiled-coil region spans residues 767–800; sequence RALYLRIQQKQQEEEERARRLAESSKQDRENEEG. S807 and S808 each carry phosphoserine. A compositionally biased stretch (polar residues) spans 815–843; it reads SSVTSILKTLRQQTSSRPPASVGELSSSG. The segment covering 860–875 has biased composition (basic and acidic residues); sequence ADPRLSRDPRLTRHVE. A phosphoserine mark is found at S904, S907, and S908. The span at 904–918 shows a compositional bias: low complexity; sequence SLHSSPVGPSSSKGS. Polar residues-rich tracts occupy residues 1028–1038 and 1053–1062; these read GASTDSSTQGA and VNATGSSAAP. Positions 1067 to 1084 are enriched in basic and acidic residues; the sequence is KPSDPRVRKAPTDPRLQK. Residues 1097–1110 are compositionally biased toward low complexity; that stretch reads PGPAEAPSPTASPS. Position 1104 is a phosphoserine (S1104). Residue T1106 is modified to Phosphothreonine. A phosphoserine mark is found at S1108, S1110, and S1114. A Phosphothreonine modification is found at T1118. The span at 1129-1139 shows a compositional bias: gly residues; the sequence is GGLGQGGGGGQ. Low complexity predominate over residues 1224–1234; that stretch reads KAAAAPAATTA. A compositionally biased stretch (pro residues) spans 1235 to 1245; it reads TPPPEGAPPQP. Over residues 1259 to 1268 the composition is skewed to polar residues; that stretch reads VKQTPKTGSG. Phosphoserine is present on residues S1269 and S1275.

This sequence belongs to the suppressor of sable family. In terms of assembly, interacts with WDR82.

The protein localises to the chromosome. Its function is as follows. RNA-binding protein that suppresses transcription of long non-coding RNAs (lncRNAs). LncRNAs are defined as transcripts more than 200 nucleotides that are not translated into protein. Together with WDR82, part of a transcription termination checkpoint that promotes transcription termination of lncRNAs and their subsequent degradation by the exosome. The transcription termination checkpoint is activated by the inefficiently spliced first exon of lncRNAs. This Homo sapiens (Human) protein is Zinc finger CCCH domain-containing protein 4.